We begin with the raw amino-acid sequence, 119 residues long: Hydrogenase maturation factor HypA (119 aa).

Residue histidine 2 participates in Ni(2+) binding. Residues cysteine 73, cysteine 76, cysteine 89, and cysteine 92 each contribute to the Zn(2+) site.

The protein belongs to the HypA/HybF family.

In terms of biological role, involved in the maturation of [NiFe] hydrogenases. Required for nickel insertion into the metal center of the hydrogenase. In Dehalococcoides mccartyi (strain ATCC BAA-2100 / JCM 16839 / KCTC 5957 / BAV1), this protein is Hydrogenase maturation factor HypA.